The chain runs to 90 residues: Small ribosomal subunit protein bS18 (90 aa).

The protein belongs to the bacterial ribosomal protein bS18 family. As to quaternary structure, part of the 30S ribosomal subunit. Forms a tight heterodimer with protein bS6.

Functionally, binds as a heterodimer with protein bS6 to the central domain of the 16S rRNA, where it helps stabilize the platform of the 30S subunit. This is Small ribosomal subunit protein bS18 from Bacteroides thetaiotaomicron (strain ATCC 29148 / DSM 2079 / JCM 5827 / CCUG 10774 / NCTC 10582 / VPI-5482 / E50).